The sequence spans 546 residues: MFRLSTTPRFTRCFQGRRQRISIAQIPPVQFISYSSSAAQSLSILPNSAFRSLRVCGARFQRFERSQLGLEYCVPRRQIHYYSMGLDKKVAMDKILEGKYPAKEHARKVVEYLRSKEPEAEGVLYLEAQKTVMIEDNDEAAPFRQRRYFYYLTGCDLPDSYFTYNISTGKSTLFIPPIDPESVIWTGLPLSPEEALALYDVDEVLTTDMINAHLALPNQSKVWAIAPQISTHITFLEFPQKDFTLLKEAIEEARVRKSEYEVALIRKANEISTVGHTAVLKAVKHVKNERDLEALFIKESIANGAREQAYHSIVASGTAAATLHYMKNSEGLDGKLNLLLDAGGEYKCYASDITRTFPINGKFTPESRSIYDIVLSMQSQCTSMLKAGVSWDEVHLLAHKIAIEGLLSLNILKGDKDEILKARTSVAFFPHGLGHYLGMDTHDTGGHPNYEDKDRLFRYLRVRGTLPEGSVVTVEPGIYFCRFIIEPYLKDPAHAQYINADILEKYWEVGGVRIEDNILITKDGYDNLTTSIKDVDEMEKIINSVY.

Mn(2+)-binding residues include Asp-341, Asp-352, Glu-475, and Glu-515.

Belongs to the peptidase M24B family. Requires Mn(2+) as cofactor.

It catalyses the reaction Release of any N-terminal amino acid, including proline, that is linked to proline, even from a dipeptide or tripeptide.. In terms of biological role, catalyzes the removal of a penultimate prolyl residue from the N-termini of peptides. This is Probable Xaa-Pro aminopeptidase pepP (pepP) from Sclerotinia sclerotiorum (strain ATCC 18683 / 1980 / Ss-1) (White mold).